We begin with the raw amino-acid sequence, 381 residues long: Homoserine O-succinyltransferase (381 aa).

The AB hydrolase-1 domain occupies 45 to 360 (NAVLVCHALN…PHGHDAFLLD (316 aa)). The active-site Nucleophile is serine 151. Substrate is bound at residue arginine 221. Catalysis depends on residues aspartate 321 and histidine 354. A substrate-binding site is contributed by aspartate 355.

This sequence belongs to the AB hydrolase superfamily. MetX family. In terms of assembly, homodimer.

It localises to the cytoplasm. It catalyses the reaction L-homoserine + succinyl-CoA = O-succinyl-L-homoserine + CoA. The protein operates within amino-acid biosynthesis; L-methionine biosynthesis via de novo pathway; O-succinyl-L-homoserine from L-homoserine: step 1/1. Its function is as follows. Transfers a succinyl group from succinyl-CoA to L-homoserine, forming succinyl-L-homoserine. This Burkholderia mallei (strain NCTC 10247) protein is Homoserine O-succinyltransferase.